A 480-amino-acid chain; its full sequence is Ribulose bisphosphate carboxylase large chain (480 aa).

A propeptide spanning residues 1 to 2 is cleaved from the precursor; it reads MS. P3 carries the post-translational modification N-acetylproline. K14 bears the N6,N6,N6-trimethyllysine mark. Residues N123 and T173 each coordinate substrate. The active-site Proton acceptor is K175. K177 contributes to the substrate binding site. Positions 201, 203, and 204 each coordinate Mg(2+). An N6-carboxylysine modification is found at K201. The Proton acceptor role is filled by H294. 3 residues coordinate substrate: R295, H327, and S379.

It belongs to the RuBisCO large chain family. Type I subfamily. In terms of assembly, heterohexadecamer of 8 large chains and 8 small chains; disulfide-linked. The disulfide link is formed within the large subunit homodimers. Mg(2+) serves as cofactor. Post-translationally, the disulfide bond which can form in the large chain dimeric partners within the hexadecamer appears to be associated with oxidative stress and protein turnover.

It is found in the plastid. It localises to the chloroplast. It carries out the reaction 2 (2R)-3-phosphoglycerate + 2 H(+) = D-ribulose 1,5-bisphosphate + CO2 + H2O. The enzyme catalyses D-ribulose 1,5-bisphosphate + O2 = 2-phosphoglycolate + (2R)-3-phosphoglycerate + 2 H(+). In terms of biological role, ruBisCO catalyzes two reactions: the carboxylation of D-ribulose 1,5-bisphosphate, the primary event in carbon dioxide fixation, as well as the oxidative fragmentation of the pentose substrate in the photorespiration process. Both reactions occur simultaneously and in competition at the same active site. The sequence is that of Ribulose bisphosphate carboxylase large chain from Acorus calamus var. americanus (American sweet flag).